Reading from the N-terminus, the 576-residue chain is Proline--tRNA ligase (576 aa).

This sequence belongs to the class-II aminoacyl-tRNA synthetase family. ProS type 1 subfamily. As to quaternary structure, homodimer.

It localises to the cytoplasm. It catalyses the reaction tRNA(Pro) + L-proline + ATP = L-prolyl-tRNA(Pro) + AMP + diphosphate. Functionally, catalyzes the attachment of proline to tRNA(Pro) in a two-step reaction: proline is first activated by ATP to form Pro-AMP and then transferred to the acceptor end of tRNA(Pro). As ProRS can inadvertently accommodate and process non-cognate amino acids such as alanine and cysteine, to avoid such errors it has two additional distinct editing activities against alanine. One activity is designated as 'pretransfer' editing and involves the tRNA(Pro)-independent hydrolysis of activated Ala-AMP. The other activity is designated 'posttransfer' editing and involves deacylation of mischarged Ala-tRNA(Pro). The misacylated Cys-tRNA(Pro) is not edited by ProRS. This chain is Proline--tRNA ligase, found in Magnetococcus marinus (strain ATCC BAA-1437 / JCM 17883 / MC-1).